A 71-amino-acid polypeptide reads, in one-letter code: Metallothionein-like protein 1 (71 aa).

It belongs to the metallothionein superfamily. Type 15 family.

Metallothioneins have a high content of cysteine residues that bind various heavy metals. The sequence is that of Metallothionein-like protein 1 (MT1) from Casuarina glauca (Swamp oak).